We begin with the raw amino-acid sequence, 432 residues long: Neuronal pentraxin-2 (432 aa).

Residues 1–14 (MLALLTAGVALAVA) form the signal peptide. 2 N-linked (GlcNAc...) asparagine glycosylation sites follow: Asn149 and Asn190. One can recognise a Pentraxin (PTX) domain in the interval 224–425 (DAFKVSLPLR…GASKWPVETC (202 aa)). An intrachain disulfide couples Cys254 to Cys314. Positions 278, 356, 357, 358, and 368 each coordinate Ca(2+). N-linked (GlcNAc...) asparagine glycosylation is present at Asn394.

Homooligomer or heterooligomer (probably pentamer) with neuronal pentraxin receptor (NPTXR). Ca(2+) is required as a cofactor.

The protein localises to the secreted. In terms of biological role, likely to play role in the modification of cellular properties that underlie long-term plasticity. Binds to agar matrix in a calcium-dependent manner. This Rattus norvegicus (Rat) protein is Neuronal pentraxin-2 (Nptx2).